Consider the following 561-residue polypeptide: Dihydroxy-acid dehydratase (561 aa).

Position 78 (Asp-78) interacts with Mg(2+). Cys-119 lines the [2Fe-2S] cluster pocket. Positions 120 and 121 each coordinate Mg(2+). At Lys-121 the chain carries N6-carboxylysine. Cys-192 provides a ligand contact to [2Fe-2S] cluster. Glu-448 contributes to the Mg(2+) binding site. The active-site Proton acceptor is the Ser-474.

Belongs to the IlvD/Edd family. Homodimer. [2Fe-2S] cluster is required as a cofactor. The cofactor is Mg(2+).

The enzyme catalyses (2R)-2,3-dihydroxy-3-methylbutanoate = 3-methyl-2-oxobutanoate + H2O. The catalysed reaction is (2R,3R)-2,3-dihydroxy-3-methylpentanoate = (S)-3-methyl-2-oxopentanoate + H2O. Its pathway is amino-acid biosynthesis; L-isoleucine biosynthesis; L-isoleucine from 2-oxobutanoate: step 3/4. It participates in amino-acid biosynthesis; L-valine biosynthesis; L-valine from pyruvate: step 3/4. Its function is as follows. Functions in the biosynthesis of branched-chain amino acids. Catalyzes the dehydration of (2R,3R)-2,3-dihydroxy-3-methylpentanoate (2,3-dihydroxy-3-methylvalerate) into 2-oxo-3-methylpentanoate (2-oxo-3-methylvalerate) and of (2R)-2,3-dihydroxy-3-methylbutanoate (2,3-dihydroxyisovalerate) into 2-oxo-3-methylbutanoate (2-oxoisovalerate), the penultimate precursor to L-isoleucine and L-valine, respectively. This Sulfurimonas denitrificans (strain ATCC 33889 / DSM 1251) (Thiomicrospira denitrificans (strain ATCC 33889 / DSM 1251)) protein is Dihydroxy-acid dehydratase.